Consider the following 275-residue polypeptide: Phosphonates import ATP-binding protein PhnC (275 aa).

The 245-residue stretch at L2–E246 folds into the ABC transporter domain. G35–S42 contributes to the ATP binding site.

The protein belongs to the ABC transporter superfamily. Phosphonates importer (TC 3.A.1.9.1) family. The complex is composed of two ATP-binding proteins (PhnC), two transmembrane proteins (PhnE) and a solute-binding protein (PhnD).

The protein localises to the cell inner membrane. The catalysed reaction is phosphonate(out) + ATP + H2O = phosphonate(in) + ADP + phosphate + H(+). Part of the ABC transporter complex PhnCDE involved in phosphonates import. Responsible for energy coupling to the transport system. In Wolinella succinogenes (strain ATCC 29543 / DSM 1740 / CCUG 13145 / JCM 31913 / LMG 7466 / NCTC 11488 / FDC 602W) (Vibrio succinogenes), this protein is Phosphonates import ATP-binding protein PhnC.